Consider the following 392-residue polypeptide: Succinate--CoA ligase [ADP-forming] subunit beta (392 aa).

Positions Lys9–Glu248 constitute an ATP-grasp domain. ATP is bound by residues Lys50, Gly57–Gly59, Glu103, Met106, and Glu111. Mg(2+) is bound by residues Asn203 and Asp217. Substrate contacts are provided by residues Asn268 and Gly325 to Val327.

The protein belongs to the succinate/malate CoA ligase beta subunit family. In terms of assembly, heterotetramer of two alpha and two beta subunits. Requires Mg(2+) as cofactor.

The enzyme catalyses succinate + ATP + CoA = succinyl-CoA + ADP + phosphate. It catalyses the reaction GTP + succinate + CoA = succinyl-CoA + GDP + phosphate. It functions in the pathway carbohydrate metabolism; tricarboxylic acid cycle; succinate from succinyl-CoA (ligase route): step 1/1. Its function is as follows. Succinyl-CoA synthetase functions in the citric acid cycle (TCA), coupling the hydrolysis of succinyl-CoA to the synthesis of either ATP or GTP and thus represents the only step of substrate-level phosphorylation in the TCA. The beta subunit provides nucleotide specificity of the enzyme and binds the substrate succinate, while the binding sites for coenzyme A and phosphate are found in the alpha subunit. The polypeptide is Succinate--CoA ligase [ADP-forming] subunit beta (Chlorobaculum tepidum (strain ATCC 49652 / DSM 12025 / NBRC 103806 / TLS) (Chlorobium tepidum)).